A 388-amino-acid polypeptide reads, in one-letter code: Phosphoglycerate kinase (388 aa).

Substrate is bound by residues 21 to 23 (DLN), Arg-36, 59 to 62 (HLGR), Arg-114, and Arg-147. ATP contacts are provided by residues Lys-198, Glu-315, and 341–344 (GGDT).

This sequence belongs to the phosphoglycerate kinase family. Monomer.

It localises to the cytoplasm. The catalysed reaction is (2R)-3-phosphoglycerate + ATP = (2R)-3-phospho-glyceroyl phosphate + ADP. It functions in the pathway carbohydrate degradation; glycolysis; pyruvate from D-glyceraldehyde 3-phosphate: step 2/5. The chain is Phosphoglycerate kinase from Hahella chejuensis (strain KCTC 2396).